An 845-amino-acid polypeptide reads, in one-letter code: Tyrosine-protein phosphatase corkscrew (845 aa).

2 consecutive SH2 domains span residues 6-101 and 111-205; these read WFHP…KQPL and WFHG…RQPF. Residues 227–645 enclose the Tyrosine-protein phosphatase domain; it reads FWEEFESLQQ…KFVYYAVQHY (419 aa). Positions 289–444 are PTPase insert (Cys/Ser-rich); the sequence is IRLPTDGDLY…REREREMFKT (156 aa). Residues 362–402 are disordered; sequence SKHKRSESSASSSPSSGSGSGPGSSGTSGVSSVNGPGTPTN. 2 stretches are compositionally biased toward low complexity: residues 369 to 378 and 388 to 400; these read SSASSSPSSG and TSGV…PGTP. Ser419 is subject to Phosphoserine. Residues Asp545, 583 to 589, and Gln630 each bind substrate; that span reads CSAGIGR. Cys583 (phosphocysteine intermediate) is an active-site residue. Residues 793–824 are disordered; sequence DSLKQQQQREEQAPAGAGKMQQPAPPLRPRPG.

The protein belongs to the protein-tyrosine phosphatase family. Non-receptor class subfamily. As to quaternary structure, interacts with drpr isoform A. Expressed uniformly throughout all tissues during embryogenesis.

The protein localises to the cytoplasm. The catalysed reaction is O-phospho-L-tyrosyl-[protein] + H2O = L-tyrosyl-[protein] + phosphate. Required in all receptor tyrosine kinase signaling pathways. Functions downstream of the receptor tyrosine kinase torso, acting in concert with D-Raf via tailless. Also functions downstream of Egfr (epidermal growth factor receptor) and btl (fibroblast growth factor receptor). The SH2 domain suggests that csw effects its role by mediating heteromeric protein interactions. Maternally required for normal determination of cell fates at the termini of the embryo. Required for cell fate specification of the ventral ectoderm, in the developing embryonic CNS and for embryonic tracheal cell migration. Functions during imaginal development for proper formation of adult structures such as eyes, aristae, L5 wing vein and the tarsal claw. Dephosphorylates drpr isoform A which is required for the inhibition by drpr isoform A of glial cell engulfment of axonal debris produced following axonal injury. The protein is Tyrosine-protein phosphatase corkscrew (csw) of Drosophila melanogaster (Fruit fly).